The primary structure comprises 433 residues: Homogentisate 1,2-dioxygenase (433 aa).

The active-site Proton acceptor is His-288. Residues His-331 and Glu-337 each contribute to the Fe cation site. Homogentisate contacts are provided by Tyr-346 and His-367. Residue His-367 participates in Fe cation binding.

It belongs to the homogentisate dioxygenase family. In terms of assembly, hexamer; dimer of trimers. Fe cation serves as cofactor.

The catalysed reaction is homogentisate + O2 = 4-maleylacetoacetate + H(+). Its pathway is amino-acid degradation; L-phenylalanine degradation; acetoacetate and fumarate from L-phenylalanine: step 4/6. Involved in the catabolism of homogentisate (2,5-dihydroxyphenylacetate or 2,5-OH-PhAc), a central intermediate in the degradation of phenylalanine and tyrosine. Catalyzes the oxidative ring cleavage of the aromatic ring of homogentisate to yield maleylacetoacetate. In Pseudomonas entomophila (strain L48), this protein is Homogentisate 1,2-dioxygenase.